Here is a 146-residue protein sequence, read N- to C-terminus: Hemoglobin subunit beta (146 aa).

A Globin domain is found at 2-146; the sequence is FLTAEEKGLV…VANALAHKYH (145 aa). Serine 44 carries the post-translational modification Phosphoserine. Position 59 is an N6-acetyllysine (lysine 59). Histidine 63 provides a ligand contact to heme b. Lysine 82 carries the N6-acetyllysine modification. Position 92 (histidine 92) interacts with heme b. Position 93 is an S-nitrosocysteine (cysteine 93). Position 144 is an N6-acetyllysine (lysine 144).

Belongs to the globin family. As to quaternary structure, heterotetramer of two alpha chains and two beta chains. In terms of tissue distribution, red blood cells.

Involved in oxygen transport from the lung to the various peripheral tissues. The sequence is that of Hemoglobin subunit beta (HBB) from Lynx lynx (Eurasian lynx).